The chain runs to 473 residues: Photosystem II CP43 reaction center protein (473 aa).

The propeptide occupies Met-1–Glu-14. Thr-15 carries the post-translational modification N-acetylthreonine. Thr-15 is modified (phosphothreonine). 5 helical membrane-spanning segments follow: residues Leu-69–Ala-93, Leu-134–Asn-155, Lys-178–Thr-200, Lys-255–Ser-275, and Trp-291–Ala-312. Glu-367 contacts [CaMn4O5] cluster. A helical membrane pass occupies residues Arg-447 to Pro-471.

It belongs to the PsbB/PsbC family. PsbC subfamily. As to quaternary structure, PSII is composed of 1 copy each of membrane proteins PsbA, PsbB, PsbC, PsbD, PsbE, PsbF, PsbH, PsbI, PsbJ, PsbK, PsbL, PsbM, PsbT, PsbX, PsbY, PsbZ, Psb30/Ycf12, at least 3 peripheral proteins of the oxygen-evolving complex and a large number of cofactors. It forms dimeric complexes. Requires Binds multiple chlorophylls and provides some of the ligands for the Ca-4Mn-5O cluster of the oxygen-evolving complex. It may also provide a ligand for a Cl- that is required for oxygen evolution. PSII binds additional chlorophylls, carotenoids and specific lipids. as cofactor.

The protein resides in the plastid. It localises to the chloroplast thylakoid membrane. Its function is as follows. One of the components of the core complex of photosystem II (PSII). It binds chlorophyll and helps catalyze the primary light-induced photochemical processes of PSII. PSII is a light-driven water:plastoquinone oxidoreductase, using light energy to abstract electrons from H(2)O, generating O(2) and a proton gradient subsequently used for ATP formation. This chain is Photosystem II CP43 reaction center protein, found in Lactuca sativa (Garden lettuce).